Consider the following 435-residue polypeptide: Zinc finger CCCH domain-containing protein 67 (435 aa).

The tract at residues 1–91 (MSKPEETSDP…DQKEEEEGSE (91 aa)) is disordered. C3H1-type zinc fingers lie at residues 101–129 (RPDS…HPVR), 148–176 (NPKL…HMKE), and 194–222 (RPGE…HPDP). A disordered region spans residues 235-274 (GNNGGSFSPKAPSQASSTSWSSTRHMNGTGTAPFIPSMFP). Positions 247–256 (SQASSTSWSS) are enriched in low complexity. 2 C3H1-type zinc fingers span residues 334-362 (RPDQ…HPKN) and 380-408 (RPDQ…HSIP). Residues 412 to 435 (SPSSSQTVEARQVGANGNEDDSWH) are disordered.

Its subcellular location is the nucleus. This Arabidopsis thaliana (Mouse-ear cress) protein is Zinc finger CCCH domain-containing protein 67.